A 912-amino-acid chain; its full sequence is DNA ligase 4 (912 aa).

Residues Glu276, Thr277, Lys278, Leu279, Arg283, Glu336, Lys350, Phe372, Glu432, Lys437, Lys454, and Lys456 each coordinate ATP. Residue Lys278 is the N6-AMP-lysine intermediate of the active site. Glu336 contacts Mg(2+). Position 432 (Glu432) interacts with Mg(2+). Residues 615-625 (LASKHLYIDEY) are required for catalytic activity. BRCT domains lie at 659–748 (KVSS…PAFM) and 809–912 (CKLC…QFLI).

The protein belongs to the ATP-dependent DNA ligase family. As to quaternary structure, interacts with XRCC4; the LIG4-XRCC4 subcomplex has a 1:2 stoichiometry. Component of the core long-range non-homologous end joining (NHEJ) complex (also named DNA-PK complex) composed of PRKDC, LIG4, XRCC4, XRCC6/Ku70, XRCC5/Ku86 and NHEJ1/XLF. Additional component of the NHEJ complex includes PAXX. Following autophosphorylation, PRKDC dissociates from DNA, leading to formation of the short-range NHEJ complex, composed of LIG4, XRCC4, XRCC6/Ku70, XRCC5/Ku86 and NHEJ1/XLF. It depends on Mg(2+) as a cofactor.

It localises to the nucleus. The catalysed reaction is ATP + (deoxyribonucleotide)n-3'-hydroxyl + 5'-phospho-(deoxyribonucleotide)m = (deoxyribonucleotide)n+m + AMP + diphosphate.. DNA ligase involved in DNA non-homologous end joining (NHEJ); required for double-strand break (DSB) repair and V(D)J recombination. Catalyzes the NHEJ ligation step of the broken DNA during DSB repair by resealing the DNA breaks after the gap filling is completed. Joins single-strand breaks in a double-stranded polydeoxynucleotide in an ATP-dependent reaction. LIG4 is mechanistically flexible: it can ligate nicks as well as compatible DNA overhangs alone, while in the presence of XRCC4, it can ligate ends with 2-nucleotides (nt) microhomology and 1-nt gaps. Forms a subcomplex with XRCC4; the LIG4-XRCC4 subcomplex is responsible for the NHEJ ligation step and XRCC4 enhances the joining activity of LIG4. This chain is DNA ligase 4, found in Gallus gallus (Chicken).